Consider the following 708-residue polypeptide: Polyribonucleotide nucleotidyltransferase (708 aa).

Residues aspartate 486 and aspartate 492 each coordinate Mg(2+). The 60-residue stretch at 553-612 (PRITTIKVPPQKVREVIGSGGKVIREITEVTGTKIDIEDDGTIKIASADAEATQRAVDWI) folds into the KH domain. The 69-residue stretch at 622–690 (GVVYTGKVVK…DRGKIKLSMK (69 aa)) folds into the S1 motif domain.

It belongs to the polyribonucleotide nucleotidyltransferase family. Mg(2+) serves as cofactor.

Its subcellular location is the cytoplasm. It carries out the reaction RNA(n+1) + phosphate = RNA(n) + a ribonucleoside 5'-diphosphate. Its function is as follows. Involved in mRNA degradation. Catalyzes the phosphorolysis of single-stranded polyribonucleotides processively in the 3'- to 5'-direction. This Rhodospirillum rubrum (strain ATCC 11170 / ATH 1.1.1 / DSM 467 / LMG 4362 / NCIMB 8255 / S1) protein is Polyribonucleotide nucleotidyltransferase.